Here is a 346-residue protein sequence, read N- to C-terminus: Tetraacyldisaccharide 4'-kinase (346 aa).

An ATP-binding site is contributed by 53 to 60 (TCGGTGKT).

This sequence belongs to the LpxK family.

It carries out the reaction a lipid A disaccharide + ATP = a lipid IVA + ADP + H(+). The protein operates within glycolipid biosynthesis; lipid IV(A) biosynthesis; lipid IV(A) from (3R)-3-hydroxytetradecanoyl-[acyl-carrier-protein] and UDP-N-acetyl-alpha-D-glucosamine: step 6/6. Its function is as follows. Transfers the gamma-phosphate of ATP to the 4'-position of a tetraacyldisaccharide 1-phosphate intermediate (termed DS-1-P) to form tetraacyldisaccharide 1,4'-bis-phosphate (lipid IVA). This is Tetraacyldisaccharide 4'-kinase from Bartonella tribocorum (strain CIP 105476 / IBS 506).